We begin with the raw amino-acid sequence, 249 residues long: 5'-nucleotidase SurE (249 aa).

Residues aspartate 9, aspartate 10, serine 40, and asparagine 92 each coordinate a divalent metal cation.

It belongs to the SurE nucleotidase family. The cofactor is a divalent metal cation.

The protein localises to the cytoplasm. The catalysed reaction is a ribonucleoside 5'-phosphate + H2O = a ribonucleoside + phosphate. Its function is as follows. Nucleotidase that shows phosphatase activity on nucleoside 5'-monophosphates. This is 5'-nucleotidase SurE from Shewanella baltica (strain OS223).